A 529-amino-acid chain; its full sequence is Tyrosine--tRNA ligase, cytoplasmic (529 aa).

Position 39 (Tyr-39) interacts with L-tyrosine. The short motif at 44-52 (TTGKPHVAY) is the 'HIGH' region element. L-tyrosine-binding residues include Tyr-166, Gln-170, Asp-173, and Gln-188. Residues 222 to 226 (KMSSS) carry the 'KMSKS' region motif. The Nuclear localization signal motif lies at 242-247 (KKKLKK). Residues 335–362 (KLTSSAYPEPSKNKGGVKGNPKQTTDDD) are disordered. A tRNA-binding domain is found at 365-469 (IPSRLDIRVG…EGSAAGDRVY (105 aa)).

The protein belongs to the class-I aminoacyl-tRNA synthetase family. Homodimer.

The protein localises to the cytoplasm. Its subcellular location is the nucleus. The catalysed reaction is tRNA(Tyr) + L-tyrosine + ATP = L-tyrosyl-tRNA(Tyr) + AMP + diphosphate + H(+). Catalyzes the attachment of tyrosine to tRNA(Tyr) in a two-step reaction: tyrosine is first activated by ATP to form Tyr-AMP and then transferred to the acceptor end of tRNA(Tyr). The protein is Tyrosine--tRNA ligase, cytoplasmic (yars1) of Danio rerio (Zebrafish).